A 309-amino-acid polypeptide reads, in one-letter code: Tagatose-6-phosphate kinase (309 aa).

It belongs to the carbohydrate kinase PfkB family. LacC subfamily.

The catalysed reaction is D-tagatofuranose 6-phosphate + ATP = D-tagatofuranose 1,6-bisphosphate + ADP + H(+). The protein operates within carbohydrate metabolism; D-tagatose 6-phosphate degradation; D-glyceraldehyde 3-phosphate and glycerone phosphate from D-tagatose 6-phosphate: step 1/2. The sequence is that of Tagatose-6-phosphate kinase from Streptococcus pyogenes serotype M18 (strain MGAS8232).